The chain runs to 250 residues: 2,3-bisphosphoglycerate-dependent phosphoglycerate mutase (250 aa).

Substrate is bound by residues 8–15 (RHGESQWN), 21–22 (TG), Arg60, 87–90 (ERHY), Lys98, 114–115 (RR), and 183–184 (GN). His9 functions as the Tele-phosphohistidine intermediate in the catalytic mechanism. The active-site Proton donor/acceptor is Glu87.

The protein belongs to the phosphoglycerate mutase family. BPG-dependent PGAM subfamily. As to quaternary structure, homodimer.

The catalysed reaction is (2R)-2-phosphoglycerate = (2R)-3-phosphoglycerate. It participates in carbohydrate degradation; glycolysis; pyruvate from D-glyceraldehyde 3-phosphate: step 3/5. Functionally, catalyzes the interconversion of 2-phosphoglycerate and 3-phosphoglycerate. This is 2,3-bisphosphoglycerate-dependent phosphoglycerate mutase from Bordetella pertussis (strain Tohama I / ATCC BAA-589 / NCTC 13251).